Consider the following 244-residue polypeptide: uncharacterized protein (244 aa).

Positions 1-127 are disordered; sequence MSGPQGSDPR…YPGQYGPYGQ (127 aa). Over residues 34–43 the composition is skewed to polar residues; sequence WQQQPTQEAT. 2 stretches are compositionally biased toward low complexity: residues 45-75 and 88-127; these read QAPA…YAQP and PGQY…PYGQ. The chain crosses the membrane as a helical span at residues 136-156; sequence VAVIGGVIAVMAVLFIGAVLI.

It localises to the membrane. This is an uncharacterized protein from Mycobacterium tuberculosis (strain CDC 1551 / Oshkosh).